We begin with the raw amino-acid sequence, 569 residues long: Proline--tRNA ligase (569 aa).

Belongs to the class-II aminoacyl-tRNA synthetase family. ProS type 1 subfamily. As to quaternary structure, homodimer.

The protein localises to the cytoplasm. The enzyme catalyses tRNA(Pro) + L-proline + ATP = L-prolyl-tRNA(Pro) + AMP + diphosphate. Catalyzes the attachment of proline to tRNA(Pro) in a two-step reaction: proline is first activated by ATP to form Pro-AMP and then transferred to the acceptor end of tRNA(Pro). As ProRS can inadvertently accommodate and process non-cognate amino acids such as alanine and cysteine, to avoid such errors it has two additional distinct editing activities against alanine. One activity is designated as 'pretransfer' editing and involves the tRNA(Pro)-independent hydrolysis of activated Ala-AMP. The other activity is designated 'posttransfer' editing and involves deacylation of mischarged Ala-tRNA(Pro). The misacylated Cys-tRNA(Pro) is not edited by ProRS. In Dehalococcoides mccartyi (strain ATCC BAA-2266 / KCTC 15142 / 195) (Dehalococcoides ethenogenes (strain 195)), this protein is Proline--tRNA ligase.